Reading from the N-terminus, the 360-residue chain is Squamosa promoter-binding-like protein 7 (360 aa).

Over residues 74 to 89 (AQGSGGGGGGGGGGSA) the composition is skewed to gly residues. A disordered region spans residues 74–98 (AQGSGGGGGGGGGGSADQGKRKEKA). An SBP-type zinc finger spans residues 105 to 182 (VPRCQVEGCD…AGHNERRRRS (78 aa)). Cys108, Cys113, Cys130, His133, Cys149, Cys152, His156, and Cys168 together coordinate Zn(2+). The short motif at 165 to 181 (KKSCRRRLAGHNERRRR) is the Bipartite nuclear localization signal element. Residues 172-182 (LAGHNERRRRS) show a composition bias toward basic residues. 3 disordered regions span residues 172-196 (LAGH…AHPH), 261-306 (FFSD…HEHQ), and 320-360 (AAGG…ARVV).

As to expression, expressed in young panicles.

The protein localises to the nucleus. In terms of biological role, trans-acting factor that binds specifically to the consensus nucleotide sequence 5'-TNCGTACAA-3'. May be involved in panicle development. In Oryza sativa subsp. indica (Rice), this protein is Squamosa promoter-binding-like protein 7 (SPL7).